A 269-amino-acid chain; its full sequence is HTH-type transcriptional activator ArnR (269 aa).

The Cytoplasmic portion of the chain corresponds to 1–218 (MTKSLFDVLK…LLRLTNSYTL (218 aa)). Positions 39-62 (TTEISQTINTSRKSIIDAIRKLVD) form a DNA-binding region, H-T-H motif. The helical transmembrane segment at 219–239 (EMANVKVMGFILISLPLLMYF) threads the bilayer. Residues 240–242 (RDQ) lie on the Extracellular side of the membrane. The helical transmembrane segment at 243-263 (LGLIELPWLYAVIFLALLSVF) threads the bilayer. Topologically, residues 264–269 (AQILSR) are cytoplasmic.

It is found in the cell membrane. Involved in regulation of archaellar gene expression. Activates flaB transcription upon nutrient starvation by acting on the flaB promoter. The protein is HTH-type transcriptional activator ArnR of Sulfolobus acidocaldarius (strain ATCC 33909 / DSM 639 / JCM 8929 / NBRC 15157 / NCIMB 11770).